The chain runs to 368 residues: tRNA-specific 2-thiouridylase MnmA (368 aa).

Residues 11–18 (GMSGGVDS) and Met-37 each bind ATP. An interaction with target base in tRNA region spans residues 97-99 (NPD). Cys-102 serves as the catalytic Nucleophile. Cysteines 102 and 199 form a disulfide. Gly-127 serves as a coordination point for ATP. The tract at residues 149–151 (KDQ) is interaction with tRNA. The active-site Cysteine persulfide intermediate is Cys-199. The tract at residues 311–312 (RY) is interaction with tRNA.

This sequence belongs to the MnmA/TRMU family. In terms of assembly, interacts with TusE.

It is found in the cytoplasm. The enzyme catalyses S-sulfanyl-L-cysteinyl-[protein] + uridine(34) in tRNA + AH2 + ATP = 2-thiouridine(34) in tRNA + L-cysteinyl-[protein] + A + AMP + diphosphate + H(+). Catalyzes the 2-thiolation of uridine at the wobble position (U34) of tRNA(Lys), tRNA(Glu) and tRNA(Gln), leading to the formation of s(2)U34, the first step of tRNA-mnm(5)s(2)U34 synthesis. Sulfur is provided by IscS, via a sulfur-relay system. Binds ATP and its substrate tRNAs. The polypeptide is tRNA-specific 2-thiouridylase MnmA (Escherichia coli (strain SMS-3-5 / SECEC)).